The sequence spans 102 residues: Aspartyl/glutamyl-tRNA(Asn/Gln) amidotransferase subunit C (102 aa).

Belongs to the GatC family. As to quaternary structure, heterotrimer of A, B and C subunits.

It carries out the reaction L-glutamyl-tRNA(Gln) + L-glutamine + ATP + H2O = L-glutaminyl-tRNA(Gln) + L-glutamate + ADP + phosphate + H(+). The catalysed reaction is L-aspartyl-tRNA(Asn) + L-glutamine + ATP + H2O = L-asparaginyl-tRNA(Asn) + L-glutamate + ADP + phosphate + 2 H(+). Allows the formation of correctly charged Asn-tRNA(Asn) or Gln-tRNA(Gln) through the transamidation of misacylated Asp-tRNA(Asn) or Glu-tRNA(Gln) in organisms which lack either or both of asparaginyl-tRNA or glutaminyl-tRNA synthetases. The reaction takes place in the presence of glutamine and ATP through an activated phospho-Asp-tRNA(Asn) or phospho-Glu-tRNA(Gln). The sequence is that of Aspartyl/glutamyl-tRNA(Asn/Gln) amidotransferase subunit C from Bordetella bronchiseptica (strain ATCC BAA-588 / NCTC 13252 / RB50) (Alcaligenes bronchisepticus).